The primary structure comprises 138 residues: Envelope glycoprotein N (138 aa).

Residues 1–21 (MEWNTLVLGLLVLSVVAESSG) form the signal peptide. Topologically, residues 22–101 (NNSSTSTSAT…SHMYELSLSS (80 aa)) are virion surface. A helical transmembrane segment spans residues 102 to 122 (FAAWWTMLNALILMGAFCIVL). Topologically, residues 123–138 (RHCCFQNFTATTTKGY) are intravirion.

Belongs to the herpesviridae glycoprotein N family. Interacts (via N-terminus) with gM (via N-terminus). The gM-gN heterodimer forms the gCII complex. O-glycosylated.

It is found in the virion membrane. The protein localises to the host membrane. It localises to the host Golgi apparatus. Its subcellular location is the host trans-Golgi network. In terms of biological role, envelope glycoprotein necessary for proper maturation of gM and modulation of its membrane fusion activity. Also plays a critical role in virion morphogenesis. This Human cytomegalovirus (strain AD169) (HHV-5) protein is Envelope glycoprotein N.